The primary structure comprises 193 residues: Xanthine phosphoribosyltransferase (193 aa).

Leu-20 and Thr-27 together coordinate xanthine. 128-132 (ANGQA) is a binding site for 5-phospho-alpha-D-ribose 1-diphosphate. Position 156 (Lys-156) interacts with xanthine.

It belongs to the purine/pyrimidine phosphoribosyltransferase family. Xpt subfamily. In terms of assembly, homodimer.

It is found in the cytoplasm. It carries out the reaction XMP + diphosphate = xanthine + 5-phospho-alpha-D-ribose 1-diphosphate. The protein operates within purine metabolism; XMP biosynthesis via salvage pathway; XMP from xanthine: step 1/1. Converts the preformed base xanthine, a product of nucleic acid breakdown, to xanthosine 5'-monophosphate (XMP), so it can be reused for RNA or DNA synthesis. The chain is Xanthine phosphoribosyltransferase from Streptococcus pyogenes serotype M49 (strain NZ131).